We begin with the raw amino-acid sequence, 249 residues long: dTDP-4-amino-2,3,4,6-tetradeoxy-D-glucose N,N-dimethyltransferase (249 aa).

Arg30 lines the substrate pocket. S-adenosyl-L-methionine contacts are provided by residues Ala59, Glu80, and 102–103 (DI). Substrate is bound by residues Thr165, 178 to 182 (RLSHS), and Arg241.

This sequence belongs to the methyltransferase TylM1/DesVI family. Homodimer. The cofactor is Mg(2+).

It carries out the reaction dTDP-4-amino-2,3,4,6-tetradeoxy-alpha-D-erythro-hexopyranose + 2 S-adenosyl-L-methionine = dTDP-alpha-D-forosamine + 2 S-adenosyl-L-homocysteine + 2 H(+). Involved in the biosynthesis of forosamine ((4-dimethylamino)-2,3,4,6-tetradeoxy-alpha-D-threo-hexopyranose), a highly deoxygenated sugar component of several bioactive natural products such as the insecticidal spinosyns A and D. Catalyzes the dimethylation of the C-4 amino group from dTDP-4-amino-2,3,4,6-tetradeoxy-alpha-D-glucose to yield dTDP-D-forosamine. The protein is dTDP-4-amino-2,3,4,6-tetradeoxy-D-glucose N,N-dimethyltransferase of Saccharopolyspora spinosa.